The chain runs to 339 residues: Tetraacyldisaccharide 4'-kinase (339 aa).

61–68 is a binding site for ATP; it reads TAGGTGKT.

Belongs to the LpxK family.

It catalyses the reaction a lipid A disaccharide + ATP = a lipid IVA + ADP + H(+). It participates in glycolipid biosynthesis; lipid IV(A) biosynthesis; lipid IV(A) from (3R)-3-hydroxytetradecanoyl-[acyl-carrier-protein] and UDP-N-acetyl-alpha-D-glucosamine: step 6/6. Transfers the gamma-phosphate of ATP to the 4'-position of a tetraacyldisaccharide 1-phosphate intermediate (termed DS-1-P) to form tetraacyldisaccharide 1,4'-bis-phosphate (lipid IVA). The polypeptide is Tetraacyldisaccharide 4'-kinase (Stenotrophomonas maltophilia (strain R551-3)).